A 105-amino-acid chain; its full sequence is Replication restart protein PriB (105 aa).

In terms of domain architecture, SSB spans 1–102; the sequence is MTTNRLVLSG…LHAEQIELID (102 aa).

The protein belongs to the PriB family. In terms of assembly, homodimer. Interacts with PriA and DnaT. Component of the replication restart primosome. Primosome assembly occurs via a 'hand-off' mechanism. PriA binds to replication forks, subsequently PriB then DnaT bind; DnaT then displaces ssDNA to generate the helicase loading substrate.

Functionally, involved in the restart of stalled replication forks, which reloads the replicative helicase on sites other than the origin of replication; the PriA-PriB pathway is the major replication restart pathway. During primosome assembly it facilitates complex formation between PriA and DnaT on DNA; stabilizes PriA on DNA. Stimulates the DNA unwinding activity of PriA helicase. The polypeptide is Replication restart protein PriB (Photorhabdus laumondii subsp. laumondii (strain DSM 15139 / CIP 105565 / TT01) (Photorhabdus luminescens subsp. laumondii)).